Here is a 96-residue protein sequence, read N- to C-terminus: Probable quinol oxidase subunit 4 (96 aa).

Transmembrane regions (helical) follow at residues Thr-8–Thr-28, Leu-36–His-56, and Phe-68–Met-88.

Belongs to the cytochrome c oxidase bacterial subunit 4 family.

The protein localises to the cell membrane. The enzyme catalyses 2 a quinol + O2 = 2 a quinone + 2 H2O. Catalyzes quinol oxidation with the concomitant reduction of oxygen to water. The sequence is that of Probable quinol oxidase subunit 4 (qoxD) from Staphylococcus aureus (strain USA300).